The following is a 481-amino-acid chain: Proline--tRNA ligase (481 aa).

It belongs to the class-II aminoacyl-tRNA synthetase family. ProS type 3 subfamily. As to quaternary structure, homodimer.

Its subcellular location is the cytoplasm. It carries out the reaction tRNA(Pro) + L-proline + ATP = L-prolyl-tRNA(Pro) + AMP + diphosphate. Its function is as follows. Catalyzes the attachment of proline to tRNA(Pro) in a two-step reaction: proline is first activated by ATP to form Pro-AMP and then transferred to the acceptor end of tRNA(Pro). This Chlorobaculum tepidum (strain ATCC 49652 / DSM 12025 / NBRC 103806 / TLS) (Chlorobium tepidum) protein is Proline--tRNA ligase.